Here is a 330-residue protein sequence, read N- to C-terminus: ATP-dependent Clp protease proteolytic subunit-related protein 3, chloroplastic (330 aa).

Residues 1 to 43 (MASCLQASMNSLLPRSSSFSPHPPLSSNSSGRRNLKTFRYAFR) constitute a chloroplast transit peptide. Residues 7–32 (ASMNSLLPRSSSFSPHPPLSSNSSGR) are disordered. Over residues 8 to 30 (SMNSLLPRSSSFSPHPPLSSNSS) the composition is skewed to low complexity.

The protein belongs to the peptidase S14 family. In terms of assembly, component of the chloroplastic Clp protease core complex which consist of at least 16 proteins: CLPP4 (3 copies), CLPP5 (3 copies), CLPR4 (2 copies), ClpP1 (1 copy), CLPP6 (1 copy), CLPR2 (1 copy), CLPT1 (1 copy), CLPT2 (1 copy) and 3 copies of CLPP3 and/or CLPR1 and/or CLPR3. The core complex is organized in two heptameric rings, one containing CLPP3,4,5,6 in a 1:2:3:1 ratio and the other CLPP1 and CLPR1,2,3,4 in a 3:1:1:1:1 ratio.

It is found in the plastid. Its subcellular location is the chloroplast. The sequence is that of ATP-dependent Clp protease proteolytic subunit-related protein 3, chloroplastic from Arabidopsis thaliana (Mouse-ear cress).